Consider the following 57-residue polypeptide: Insulin (57 aa).

Intrachain disulfides connect Cys-12/Cys-43, Cys-24/Cys-56, and Cys-42/Cys-47.

This sequence belongs to the insulin family. In terms of assembly, heterodimer of a B chain and an A chain linked by two disulfide bonds.

The protein resides in the secreted. In terms of biological role, insulin decreases blood glucose concentration. It increases cell permeability to monosaccharides, amino acids and fatty acids. It accelerates glycolysis, the pentose phosphate cycle, and glycogen synthesis in liver. This Lampetra fluviatilis (European river lamprey) protein is Insulin (ins).